The primary structure comprises 863 residues: Leucine--tRNA ligase (863 aa).

Residues 42–52 (PYPSGKLHMGH) carry the 'HIGH' region motif. Residues 623 to 627 (KMSKS) carry the 'KMSKS' region motif. Residue lysine 626 participates in ATP binding.

This sequence belongs to the class-I aminoacyl-tRNA synthetase family.

It localises to the cytoplasm. The enzyme catalyses tRNA(Leu) + L-leucine + ATP = L-leucyl-tRNA(Leu) + AMP + diphosphate. The sequence is that of Leucine--tRNA ligase from Paraburkholderia xenovorans (strain LB400).